We begin with the raw amino-acid sequence, 116 residues long: Iron-sulfur cluster insertion protein ErpA (116 aa).

Iron-sulfur cluster contacts are provided by Cys44, Cys108, and Cys110.

The protein belongs to the HesB/IscA family. Homodimer. Iron-sulfur cluster is required as a cofactor.

Its function is as follows. Required for insertion of 4Fe-4S clusters for at least IspG. The protein is Iron-sulfur cluster insertion protein ErpA of Shewanella denitrificans (strain OS217 / ATCC BAA-1090 / DSM 15013).